Reading from the N-terminus, the 272-residue chain is Probable ribonuclease HI_0526 (272 aa).

The signal sequence occupies residues Met-1–Thr-23. Catalysis depends on residues His-148, Glu-195, and His-199.

Belongs to the RNase T2 family.

In Haemophilus influenzae (strain ATCC 51907 / DSM 11121 / KW20 / Rd), this protein is Probable ribonuclease HI_0526.